The sequence spans 341 residues: Hydrogenase expression/formation protein HupE (341 aa).

This sequence belongs to the HypE family.

Functionally, may be involved in the maturation of the NifE hydrogenase. The polypeptide is Hydrogenase expression/formation protein HupE (hupE) (Azotobacter chroococcum mcd 1).